The sequence spans 786 residues: UPF0313 protein SO_0311 (786 aa).

Residues 371 to 649 enclose the Radical SAM core domain; it reads AYDMIKTSIN…KALLRYHDPA (279 aa). Residues C385, C389, and C392 each coordinate [4Fe-4S] cluster. Disordered regions lie at residues 669 to 688 and 698 to 786; these read NSPN…PKWM and LTRF…QQAK. 2 stretches are compositionally biased toward basic and acidic residues: residues 679–688 and 706–717; these read GRNERGPKWM and FDERKGKGDAKG. The span at 718 to 731 shows a compositional bias: low complexity; it reads KPSASKPKGPKSGA. Polar residues predominate over residues 732 to 741; the sequence is NAPQSQQPKT.

The protein belongs to the UPF0313 family. It depends on [4Fe-4S] cluster as a cofactor.

This chain is UPF0313 protein SO_0311, found in Shewanella oneidensis (strain ATCC 700550 / JCM 31522 / CIP 106686 / LMG 19005 / NCIMB 14063 / MR-1).